Consider the following 329-residue polypeptide: Ribosomal RNA small subunit methyltransferase H (329 aa).

S-adenosyl-L-methionine is bound by residues G39–Y41, D57, F84, D100, and Q107. Residues G285–G305 form a disordered region.

It belongs to the methyltransferase superfamily. RsmH family.

The protein resides in the cytoplasm. It carries out the reaction cytidine(1402) in 16S rRNA + S-adenosyl-L-methionine = N(4)-methylcytidine(1402) in 16S rRNA + S-adenosyl-L-homocysteine + H(+). Its function is as follows. Specifically methylates the N4 position of cytidine in position 1402 (C1402) of 16S rRNA. This Ruegeria sp. (strain TM1040) (Silicibacter sp.) protein is Ribosomal RNA small subunit methyltransferase H.